We begin with the raw amino-acid sequence, 456 residues long: PTS system sucrose-specific EIIBC component (456 aa).

Positions 4–87 (EQISCSLLPL…TQAAGISESS (84 aa)) constitute a PTS EIIB type-1 domain. Residue Cys-26 is the Phosphocysteine intermediate; for EIIB activity of the active site. A PTS EIIC type-1 domain is found at 107 to 456 (RLLSNIFVPI…LVLKYKTDAE (350 aa)). The next 10 helical transmembrane spans lie at 112–132 (IFVP…LLGM), 144–164 (AIYI…PILI), 181–201 (TLGG…AAGF), 213–233 (MIGY…MSIV), 247–267 (LILT…LIIG), 288–308 (AGWL…ITGI), 329–349 (FLLP…LAVW), 360–380 (ITLP…IFGI), 388–408 (FIAA…VHVY), and 428–448 (LLNY…VSLV).

It localises to the cell inner membrane. It carries out the reaction N(pros)-phospho-L-histidyl-[protein](out) + sucrose = sucrose 6(G)-phosphate(in) + L-histidyl-[protein]. The phosphoenolpyruvate-dependent sugar phosphotransferase system (sugar PTS), a major carbohydrate active transport system, catalyzes the phosphorylation of incoming sugar substrates concomitantly with their translocation across the cell membrane. This system is involved in sucrose transport. This chain is PTS system sucrose-specific EIIBC component, found in Salmonella typhimurium.